The primary structure comprises 461 residues: Lysosomal proton-coupled steroid conjugate and bile acid symporter SLC46A3 (461 aa).

The signal sequence occupies residues 1 to 25 (MKISFIEPAILLYAFAMTLTIPLTA). Over 26–70 (QYVYRRIWEETGNYTFTSSSNVSECEQNKSSSTFAFQEEVQKKAS) the chain is Extracellular. N-linked (GlcNAc...) asparagine glycans are attached at residues asparagine 38, asparagine 46, and asparagine 53. A helical transmembrane segment spans residues 71–91 (LFSLQVEISGLIPGLVSTFML). Residues 92 to 103 (LSSSDNHGRKLP) are Cytoplasmic-facing. A helical transmembrane segment spans residues 104 to 124 (MVLSSLGSLGTNLWLCAMSYF). At 125-135 (DLPLQLLVAST) the chain is on the extracellular side. A helical transmembrane segment spans residues 136–156 (FIGALFGNYTTFWGACFAYIV). The Cytoplasmic segment spans residues 157-170 (DQEKEYKHRIIRIA). Residues 171 to 191 (VLDFMLGVVTGLTGLSSGYFI) traverse the membrane as a helical segment. Residues 192-197 (RELGFA) are Extracellular-facing. A helical membrane pass occupies residues 198–218 (WSYFIIAVVVLVNLAYILFFL). Topologically, residues 219–260 (SDPIKESSSQIVTMSCSESLKDLFYRTYMLFKNGSCKRRSLL) are cytoplasmic. Residues 261-281 (CLLIFTLVVYFFVVFGITPVF) traverse the membrane as a helical segment. The Extracellular segment spans residues 282-301 (TLYELGPPLCWNEVYIGYGS). A helical membrane pass occupies residues 302–322 (ALGSLSFLSSFLGIWLFSYCL). The Cytoplasmic portion of the chain corresponds to 323–324 (KD). The helical transmembrane segment at 325–345 (IHIAYVGIFTTMVGMMLTAFT) threads the bilayer. The Extracellular portion of the chain corresponds to 346–347 (RT). Residues 348–368 (TLMMFLVRISFFFTIMPLSIL) form a helical membrane-spanning segment. Residues 369–381 (RSMLSKVVHSTEQ) lie on the Cytoplasmic side of the membrane. Residues 382–402 (GVLFACIAFLETLGGVTSTSA) form a helical membrane-spanning segment. Topologically, residues 403–415 (YNGIYSATVAWYP) are extracellular. The helical transmembrane segment at 416 to 436 (GFVFLLSAGLLVLPAVSLCMV) threads the bilayer. The Cytoplasmic portion of the chain corresponds to 437–461 (KCIGWEEGSYTLLIHDEPSEHTSDS). The Tyrosine-based lysosomal-sorting motif signature appears at 446-449 (YTLL).

Belongs to the major facilitator superfamily. SLC46A family.

The protein resides in the lysosome membrane. It carries out the reaction estrone 3-sulfate(out) + n H(+)(out) = estrone 3-sulfate(in) + n H(+)(in). The catalysed reaction is 25-hydroxyvitamin D3 sulfate(out) + n H(+)(out) = 25-hydroxyvitamin D3 sulfate(in) + n H(+)(in). The enzyme catalyses cholate(out) + n H(+)(out) = cholate(in) + n H(+)(in). It catalyses the reaction glycocholate(out) + n H(+)(out) = glycocholate(in) + n H(+)(in). It carries out the reaction taurocholate(out) + n H(+)(out) = taurocholate(in) + n H(+)(in). The catalysed reaction is dehydroepiandrosterone 3-sulfate(out) + n H(+)(out) = dehydroepiandrosterone 3-sulfate(in) + n H(+)(in). The enzyme catalyses N-acetyl-D-muramoyl-L-alanyl-D-isoglutamine(out) + n H(+)(out) = N-acetyl-D-muramoyl-L-alanyl-D-isoglutamine(in) + n H(+)(in). It catalyses the reaction 2',3'-cGAMP(out) + n H(+)(out) = 2',3'-cGAMP(in) + n H(+)(in). Its function is as follows. Lysosomal proton-coupled steroid conjugate and bile acid transporter. Preferentially recognizes lipophilic steroid conjugates or bile acis as endogenous substrates and seems to mediate escape from lysosomes to the cytoplasm. Modulates hepatic cytosolic copper homeostasis, maybe acting as a lysosomal copper transporter and sequestering copper ions in the lysosome. Delivers pathogen-associated molecular patterns to cytosolic pattern recognition receptors as part of the innate immune response to microbes. Selectively transports bacterial muramyl dipeptide (MDP) into the cytosol for recognition by NOD2, triggering inflammatory responses. Likely acts as a redundant importer of cyclic GMP-AMP dinucleotides (cGAMPs) in monocyte and macrophage cell lineages. The transport mechanism, its electrogenicity and stoichiometry remain to be elucidated. In Rattus norvegicus (Rat), this protein is Lysosomal proton-coupled steroid conjugate and bile acid symporter SLC46A3 (Slc46a3).